A 551-amino-acid polypeptide reads, in one-letter code: Alkaline nuclease (551 aa).

This sequence belongs to the herpesviridae alkaline nuclease family. As to quaternary structure, interacts with major DNA-binding protein; this interaction increases the nuclease processivity of the alkaline exonuclease.

Its subcellular location is the host nucleus. It localises to the host cytoplasm. In terms of biological role, plays a role in processing non linear or branched viral DNA intermediates in order to promote the production of mature packaged unit-length linear progeny viral DNA molecules. Exhibits endonuclease and exonuclease activities and accepts both double-stranded and single-stranded DNA as substrate. Exonuclease digestion of DNA is in the 5'-&gt; 3' direction and the products are 5'-monophosphate nucleosides. Additionally, forms a recombinase with the major DNA-binding protein, which displays strand exchange activity. The protein is Alkaline nuclease of Varicella-zoster virus (strain Oka vaccine) (HHV-3).